Reading from the N-terminus, the 279-residue chain is Octanoyl-[GcvH]:protein N-octanoyltransferase (279 aa).

A BPL/LPL catalytic domain is found at 41-247 (DLSCNVVRTW…ALKDLGANLN (207 aa)). Cysteine 146 acts as the Acyl-thioester intermediate in catalysis.

It belongs to the octanoyltransferase LipL family.

The catalysed reaction is N(6)-octanoyl-L-lysyl-[glycine-cleavage complex H protein] + L-lysyl-[lipoyl-carrier protein] = N(6)-octanoyl-L-lysyl-[lipoyl-carrier protein] + L-lysyl-[glycine-cleavage complex H protein]. The protein operates within protein modification; protein lipoylation via endogenous pathway; protein N(6)-(lipoyl)lysine from octanoyl-[acyl-carrier-protein]. Functionally, catalyzes the amidotransfer (transamidation) of the octanoyl moiety from octanoyl-GcvH to the lipoyl domain of the E2 subunit of lipoate-dependent enzymes. In Staphylococcus epidermidis (strain ATCC 35984 / DSM 28319 / BCRC 17069 / CCUG 31568 / BM 3577 / RP62A), this protein is Octanoyl-[GcvH]:protein N-octanoyltransferase.